The sequence spans 705 residues: Elongation factor G (705 aa).

Positions 8 to 294 (ELYRNFGIMA…SVIDYLPSPL (287 aa)) constitute a tr-type G domain. GTP-binding positions include 17–24 (AHIDAGKT), 92–96 (DTPGH), and 146–149 (NKMD).

Belongs to the TRAFAC class translation factor GTPase superfamily. Classic translation factor GTPase family. EF-G/EF-2 subfamily.

The protein resides in the cytoplasm. Functionally, catalyzes the GTP-dependent ribosomal translocation step during translation elongation. During this step, the ribosome changes from the pre-translocational (PRE) to the post-translocational (POST) state as the newly formed A-site-bound peptidyl-tRNA and P-site-bound deacylated tRNA move to the P and E sites, respectively. Catalyzes the coordinated movement of the two tRNA molecules, the mRNA and conformational changes in the ribosome. This Cereibacter sphaeroides (strain KD131 / KCTC 12085) (Rhodobacter sphaeroides) protein is Elongation factor G.